Consider the following 392-residue polypeptide: DNA primase small subunit PriS (392 aa).

Residues Asp98, Asp100, and Asp295 contribute to the active site.

The protein belongs to the eukaryotic-type primase small subunit family. As to quaternary structure, heterodimer of a small subunit (PriS) and a large subunit (PriL). Mg(2+) is required as a cofactor. It depends on Mn(2+) as a cofactor.

Its function is as follows. Catalytic subunit of DNA primase, an RNA polymerase that catalyzes the synthesis of short RNA molecules used as primers for DNA polymerase during DNA replication. The small subunit contains the primase catalytic core and has DNA synthesis activity on its own. Binding to the large subunit stabilizes and modulates the activity, increasing the rate of DNA synthesis while decreasing the length of the DNA fragments, and conferring RNA synthesis capability. The DNA polymerase activity may enable DNA primase to also catalyze primer extension after primer synthesis. May also play a role in DNA repair. The polypeptide is DNA primase small subunit PriS (Haloarcula marismortui (strain ATCC 43049 / DSM 3752 / JCM 8966 / VKM B-1809) (Halobacterium marismortui)).